We begin with the raw amino-acid sequence, 130 residues long: Small ribosomal subunit protein uS9 (130 aa).

Positions 107 to 130 (DSREVERKKVGLRKARRRPQFSKR) are disordered. Positions 116-130 (VGLRKARRRPQFSKR) are enriched in basic residues.

It belongs to the universal ribosomal protein uS9 family.

The polypeptide is Small ribosomal subunit protein uS9 (Marinomonas sp. (strain MWYL1)).